The chain runs to 502 residues: Bone morphogenetic protein receptor type-1B (502 aa).

The segment covering 1–10 has biased composition (polar residues); the sequence is MPLLSSSKLS. A signal peptide spans 1 to 13; it reads MPLLSSSKLSMES. The interval 1–27 is disordered; sequence MPLLSSSKLSMESRKEDSEGTAPAPPQ. At 14–126 the chain is on the extracellular side; the sequence is RKEDSEGTAP…DFAEGNIHHK (113 aa). Cystine bridges form between cysteine 32–cysteine 53, cysteine 34–cysteine 38, cysteine 47–cysteine 71, cysteine 81–cysteine 95, and cysteine 96–cysteine 102. Asparagine 44 carries N-linked (GlcNAc...) asparagine glycosylation. A helical membrane pass occupies residues 127–148; sequence ALLISVTVCSILLVLIIIFCYF. Topologically, residues 149–502 are cytoplasmic; sequence RYKRQEARPR…KMSESQDIKL (354 aa). Residues 174-203 form the GS domain; the sequence is ESLKDLIEQSQSSGSGSGLPLLVQRTIAKQ. Residues 204–494 enclose the Protein kinase domain; the sequence is IQMVKQIGKG…LRVKKTLAKM (291 aa). ATP contacts are provided by residues 210–218 and lysine 231; that span reads IGKGRYGEV. Aspartate 332 functions as the Proton acceptor in the catalytic mechanism.

It belongs to the protein kinase superfamily. TKL Ser/Thr protein kinase family. TGFB receptor subfamily. Mg(2+) serves as cofactor. Mn(2+) is required as a cofactor. Autophosphorylated.

Its subcellular location is the cell membrane. The catalysed reaction is L-threonyl-[receptor-protein] + ATP = O-phospho-L-threonyl-[receptor-protein] + ADP + H(+). The enzyme catalyses L-seryl-[receptor-protein] + ATP = O-phospho-L-seryl-[receptor-protein] + ADP + H(+). On ligand binding, forms a receptor complex consisting of two type II and two type I transmembrane serine/threonine kinases. Type II receptors phosphorylate and activate type I receptors which autophosphorylate, then bind and activate SMAD transcription. Positively regulates chondrocyte differentiation. The chain is Bone morphogenetic protein receptor type-1B (BMPR1B) from Gallus gallus (Chicken).